The chain runs to 217 residues: 3,4-dihydroxy-2-butanone 4-phosphate synthase (217 aa).

D-ribulose 5-phosphate contacts are provided by residues 37 to 38 (RE), D42, 150 to 154 (RRGHT), and E174. E38 serves as a coordination point for Mg(2+). Mg(2+) is bound at residue H153.

Belongs to the DHBP synthase family. In terms of assembly, homodimer. Mg(2+) serves as cofactor. Mn(2+) is required as a cofactor.

It catalyses the reaction D-ribulose 5-phosphate = (2S)-2-hydroxy-3-oxobutyl phosphate + formate + H(+). It functions in the pathway cofactor biosynthesis; riboflavin biosynthesis; 2-hydroxy-3-oxobutyl phosphate from D-ribulose 5-phosphate: step 1/1. Catalyzes the conversion of D-ribulose 5-phosphate to formate and 3,4-dihydroxy-2-butanone 4-phosphate. This Syntrophotalea carbinolica (strain DSM 2380 / NBRC 103641 / GraBd1) (Pelobacter carbinolicus) protein is 3,4-dihydroxy-2-butanone 4-phosphate synthase.